We begin with the raw amino-acid sequence, 180 residues long: Translation initiation factor IF-3 (180 aa).

It belongs to the IF-3 family. Monomer.

Its subcellular location is the cytoplasm. In terms of biological role, IF-3 binds to the 30S ribosomal subunit and shifts the equilibrium between 70S ribosomes and their 50S and 30S subunits in favor of the free subunits, thus enhancing the availability of 30S subunits on which protein synthesis initiation begins. The sequence is that of Translation initiation factor IF-3 from Xylella fastidiosa (strain Temecula1 / ATCC 700964).